The sequence spans 332 residues: Cyclin-dependent kinase 1 (332 aa).

The 291-residue stretch at 22-312 (FTKLEKIGEG…AKKALVHPYF (291 aa)) folds into the Protein kinase domain. ATP contacts are provided by residues 28 to 36 (IGEGTYGVV) and Lys51. Residue Thr32 is modified to Phosphothreonine. A Phosphotyrosine modification is found at Tyr33. Asp146 functions as the Proton acceptor in the catalytic mechanism.

This sequence belongs to the protein kinase superfamily. CMGC Ser/Thr protein kinase family. CDC2/CDKX subfamily. In terms of assembly, forms a stable but non-covalent complex with a regulatory subunit and with a cyclin. Interacts with cks-1. Post-translationally, phosphorylated.

It is found in the nucleus. The protein localises to the cytoplasm. The protein resides in the cytoskeleton. Its subcellular location is the microtubule organizing center. It localises to the centrosome. It is found in the chromosome. The catalysed reaction is L-seryl-[protein] + ATP = O-phospho-L-seryl-[protein] + ADP + H(+). It carries out the reaction L-threonyl-[protein] + ATP = O-phospho-L-threonyl-[protein] + ADP + H(+). It catalyses the reaction [DNA-directed RNA polymerase] + ATP = phospho-[DNA-directed RNA polymerase] + ADP + H(+). Its activity is regulated as follows. Phosphorylation both activates and inactivates the enzyme depending on the site of phosphorylation. Functionally, plays a key role in the control of the eukaryotic cell cycle. Required for entry into S-phase and mitosis. Acts as a component of the kinase complex that phosphorylates the repetitive C-terminus of RNA polymerase II. May function in concert with npp-16 to arrest prophase blastomeres in response to anoxia. The sequence is that of Cyclin-dependent kinase 1 (cdk-1) from Caenorhabditis elegans.